We begin with the raw amino-acid sequence, 193 residues long: Anthranilate synthase component 2 (193 aa).

The region spanning 3-193 (NILFLDNFDS…QQSIEWLLNR (191 aa)) is the Glutamine amidotransferase type-1 domain. Position 57 to 59 (57 to 59 (GPG)) interacts with L-glutamine. C84 functions as the Nucleophile; for GATase activity in the catalytic mechanism. Residues Q88 and 134–135 (SL) contribute to the L-glutamine site. Active-site for GATase activity residues include H170 and E172.

Heterotetramer consisting of two non-identical subunits: a beta subunit (TrpG) and a large alpha subunit (TrpE).

It carries out the reaction chorismate + L-glutamine = anthranilate + pyruvate + L-glutamate + H(+). It functions in the pathway amino-acid biosynthesis; L-tryptophan biosynthesis; L-tryptophan from chorismate: step 1/5. Its function is as follows. Part of a heterotetrameric complex that catalyzes the two-step biosynthesis of anthranilate, an intermediate in the biosynthesis of L-tryptophan. In the first step, the glutamine-binding beta subunit (TrpG) of anthranilate synthase (AS) provides the glutamine amidotransferase activity which generates ammonia as a substrate that, along with chorismate, is used in the second step, catalyzed by the large alpha subunit of AS (TrpE) to produce anthranilate. In the absence of TrpG, TrpE can synthesize anthranilate directly from chorismate and high concentrations of ammonia. The sequence is that of Anthranilate synthase component 2 (trpG) from Haemophilus influenzae (strain ATCC 51907 / DSM 11121 / KW20 / Rd).